A 511-amino-acid chain; its full sequence is Alpha-amylase 1 (511 aa).

The first 15 residues, 1-15, serve as a signal peptide directing secretion; it reads MKFFLLLSLIGFCWA. Residue Gln16 is modified to Pyrrolidone carboxylic acid. Intrachain disulfides connect Cys43/Cys101, Cys85/Cys130, and Cys156/Cys175. 3 residues coordinate Ca(2+): Asn115, Arg173, and Asp182. Residue Arg210 participates in chloride binding. The active-site Nucleophile is Asp212. His216 is a binding site for Ca(2+). The Proton donor role is filled by Glu248. The chloride site is built by Asn313 and Arg352. 2 cysteine pairs are disulfide-bonded: Cys393–Cys399 and Cys465–Cys477.

Belongs to the glycosyl hydrolase 13 family. Monomer. Ca(2+) is required as a cofactor. Requires chloride as cofactor. In terms of tissue distribution, expressed in liver and saliva.

The protein resides in the secreted. It carries out the reaction Endohydrolysis of (1-&gt;4)-alpha-D-glucosidic linkages in polysaccharides containing three or more (1-&gt;4)-alpha-linked D-glucose units.. The chain is Alpha-amylase 1 (Amy1) from Mus musculus (Mouse).